The primary structure comprises 90 residues: Molybdopterin synthase sulfur carrier subunit (90 aa).

Residue Gly-90 is modified to 1-thioglycine; alternate. The residue at position 90 (Gly-90) is a Glycyl adenylate; alternate.

The protein belongs to the MoaD family. MOCS2A subfamily. In terms of assembly, heterotetramer; composed of 2 small (Mocs2A) and 2 large (Mocs2B) subunits. C-terminal thiocarboxylation occurs in 2 steps, it is first acyl-adenylated (-COAMP) via the hesA/moeB/thiF part of MOCS3, then thiocarboxylated (-COSH) via the rhodanese domain of MOCS3.

It localises to the cytoplasm. The protein operates within cofactor biosynthesis; molybdopterin biosynthesis. Acts as a sulfur carrier required for molybdopterin biosynthesis. Component of the molybdopterin synthase complex that catalyzes the conversion of precursor Z into molybdopterin by mediating the incorporation of 2 sulfur atoms into precursor Z to generate a dithiolene group. In the complex, serves as sulfur donor by being thiocarboxylated (-COSH) at its C-terminus by MOCS3. After interaction with Mocs2B, the sulfur is then transferred to precursor Z to form molybdopterin. The protein is Molybdopterin synthase sulfur carrier subunit of Drosophila simulans (Fruit fly).